A 118-amino-acid chain; its full sequence is Non-specific lipid-transfer protein D (118 aa).

The signal sequence occupies residues methionine 1–alanine 25. 4 disulfides stabilise this stretch: cysteine 29–cysteine 77, cysteine 39–cysteine 54, cysteine 55–cysteine 100, and cysteine 75–cysteine 114.

Belongs to the plant LTP family.

Plant non-specific lipid-transfer proteins transfer phospholipids as well as galactolipids across membranes. May play a role in wax or cutin deposition in the cell walls of expanding epidermal cells and certain secretory tissues. This is Non-specific lipid-transfer protein D (WAX9D) from Brassica oleracea var. italica (Broccoli).